Reading from the N-terminus, the 481-residue chain is Cardiolipin synthase A (481 aa).

A run of 2 helical transmembrane segments spans residues 10–30 and 40–60; these read FFGY…LHAL and IAWA…YLIF. 2 PLD phosphodiesterase domains span residues 220-247 and 394-421; these read VNFR…GDEY and QPGF…DNRS. Active-site residues include His-225, Lys-227, Asp-232, His-399, Lys-401, and Asp-406.

The protein belongs to the phospholipase D family. Cardiolipin synthase subfamily. ClsA sub-subfamily.

The protein resides in the cell inner membrane. It catalyses the reaction 2 a 1,2-diacyl-sn-glycero-3-phospho-(1'-sn-glycerol) = a cardiolipin + glycerol. In terms of biological role, catalyzes the reversible phosphatidyl group transfer from one phosphatidylglycerol molecule to another to form cardiolipin (CL) (diphosphatidylglycerol) and glycerol. This Pseudomonas putida (strain ATCC 47054 / DSM 6125 / CFBP 8728 / NCIMB 11950 / KT2440) protein is Cardiolipin synthase A.